Reading from the N-terminus, the 349-residue chain is 4-hydroxythreonine-4-phosphate dehydrogenase (349 aa).

Substrate is bound by residues H141 and T142. Residues H176, H221, and H276 each contribute to the a divalent metal cation site. Residues K284, N293, and R302 each contribute to the substrate site.

The protein belongs to the PdxA family. As to quaternary structure, homodimer. Requires Zn(2+) as cofactor. It depends on Mg(2+) as a cofactor. The cofactor is Co(2+).

The protein resides in the cytoplasm. The enzyme catalyses 4-(phosphooxy)-L-threonine + NAD(+) = 3-amino-2-oxopropyl phosphate + CO2 + NADH. It functions in the pathway cofactor biosynthesis; pyridoxine 5'-phosphate biosynthesis; pyridoxine 5'-phosphate from D-erythrose 4-phosphate: step 4/5. In terms of biological role, catalyzes the NAD(P)-dependent oxidation of 4-(phosphooxy)-L-threonine (HTP) into 2-amino-3-oxo-4-(phosphooxy)butyric acid which spontaneously decarboxylates to form 3-amino-2-oxopropyl phosphate (AHAP). The protein is 4-hydroxythreonine-4-phosphate dehydrogenase of Methylorubrum populi (strain ATCC BAA-705 / NCIMB 13946 / BJ001) (Methylobacterium populi).